Here is a 147-residue protein sequence, read N- to C-terminus: D-aminoacyl-tRNA deacylase (147 aa).

Residues 136-137 carry the Gly-cisPro motif, important for rejection of L-amino acids motif; sequence GP.

The protein belongs to the DTD family. As to quaternary structure, homodimer.

It is found in the cytoplasm. It catalyses the reaction glycyl-tRNA(Ala) + H2O = tRNA(Ala) + glycine + H(+). It carries out the reaction a D-aminoacyl-tRNA + H2O = a tRNA + a D-alpha-amino acid + H(+). An aminoacyl-tRNA editing enzyme that deacylates mischarged D-aminoacyl-tRNAs. Also deacylates mischarged glycyl-tRNA(Ala), protecting cells against glycine mischarging by AlaRS. Acts via tRNA-based rather than protein-based catalysis; rejects L-amino acids rather than detecting D-amino acids in the active site. By recycling D-aminoacyl-tRNA to D-amino acids and free tRNA molecules, this enzyme counteracts the toxicity associated with the formation of D-aminoacyl-tRNA entities in vivo and helps enforce protein L-homochirality. The protein is D-aminoacyl-tRNA deacylase of Streptococcus equi subsp. zooepidemicus (strain H70).